A 134-amino-acid chain; its full sequence is Holo-[acyl-carrier-protein] synthase (134 aa).

Mg(2+) contacts are provided by Asp-8 and Glu-58.

This sequence belongs to the P-Pant transferase superfamily. AcpS family. The cofactor is Mg(2+).

It localises to the cytoplasm. It carries out the reaction apo-[ACP] + CoA = holo-[ACP] + adenosine 3',5'-bisphosphate + H(+). In terms of biological role, transfers the 4'-phosphopantetheine moiety from coenzyme A to a Ser of acyl-carrier-protein. This Acidiphilium cryptum (strain JF-5) protein is Holo-[acyl-carrier-protein] synthase.